Here is a 215-residue protein sequence, read N- to C-terminus: Rac-like GTP-binding protein ARAC10 (215 aa).

A GTP-binding site is contributed by 15–22 (GDGAVGKT). An Effector region motif is present at residues 37–45 (YIPTVFDNF). GTP contacts are provided by residues 62–66 (DTAGQ) and 120–123 (TKLD). S-palmitoyl cysteine attachment occurs at residues Cys202 and Cys208.

This sequence belongs to the small GTPase superfamily. Rho family. As to quaternary structure, component of the active ARAC10-IRC5-KIN13A complex. Interacts with ICR5.

It localises to the membrane. The protein resides in the cytoplasm. Its subcellular location is the cytoskeleton. Functionally, involved in local disassembly of cortical microtubules when associated with ICR5 and KIN13A. The chain is Rac-like GTP-binding protein ARAC10 (ARAC10) from Arabidopsis thaliana (Mouse-ear cress).